Consider the following 305-residue polypeptide: Homoserine O-acetyltransferase (305 aa).

Catalysis depends on Cys142, which acts as the Acyl-thioester intermediate. Positions 163 and 192 each coordinate substrate. The Proton acceptor role is filled by His235. Residue Glu237 is part of the active site. Substrate is bound at residue Arg249.

This sequence belongs to the MetA family.

The protein localises to the cytoplasm. It catalyses the reaction L-homoserine + acetyl-CoA = O-acetyl-L-homoserine + CoA. Its pathway is amino-acid biosynthesis; L-methionine biosynthesis via de novo pathway; O-acetyl-L-homoserine from L-homoserine: step 1/1. Functionally, transfers an acetyl group from acetyl-CoA to L-homoserine, forming acetyl-L-homoserine. In Dinoroseobacter shibae (strain DSM 16493 / NCIMB 14021 / DFL 12), this protein is Homoserine O-acetyltransferase.